The chain runs to 195 residues: HTH-type transcriptional regulator BetI (195 aa).

The HTH tetR-type domain maps to 8 to 68 (SIRRRQLIDA…ATMRDITSQL (61 aa)). The segment at residues 31–50 (TIAQIARRAGVSTGIISHYF) is a DNA-binding region (H-T-H motif).

It functions in the pathway amine and polyamine biosynthesis; betaine biosynthesis via choline pathway [regulation]. Its function is as follows. Repressor involved in the biosynthesis of the osmoprotectant glycine betaine. It represses transcription of the choline transporter BetT and the genes of BetAB involved in the synthesis of glycine betaine. The chain is HTH-type transcriptional regulator BetI from Escherichia coli (strain SMS-3-5 / SECEC).